The primary structure comprises 420 residues: Annetocin receptor (420 aa).

The Extracellular portion of the chain corresponds to 1 to 54 (MEMDDDEAILLDDIYALASTPNQTIVTSSFPQTVSPGFLARRNEALAMVEVAVQ). N-linked (GlcNAc...) asparagine glycosylation occurs at N22. The helical transmembrane segment at 55 to 75 (STILILTVVGNAAVLAMIVSL) threads the bilayer. Residues 76 to 83 (SRHKDLGR) lie on the Cytoplasmic side of the membrane. Residues 84–104 (MYTMIGHLSCADLFVAIFNLL) form a helical membrane-spanning segment. At 105–124 (PQLLWDVTHRFRGGRVLCKL) the chain is on the extracellular side. A disulfide bridge connects residues C122 and C201. A helical membrane pass occupies residues 125 to 145 (VKYVQVVAMYASAYVLMSTAV). At 146-166 (DRYTAICHPMRSHTWTSTTAH) the chain is on the cytoplasmic side. The chain crosses the membrane as a helical span at residues 167 to 187 (YLVIGAWVLALVFAVPQLVIF). At 188–212 (DYVEVVPGSGVYDCVDHFRPRWTLP) the chain is on the extracellular side. A helical transmembrane segment spans residues 213-233 (VYITWFALAVYVIPLVVLATI). The Cytoplasmic portion of the chain corresponds to 234–328 (YLRICVVVWK…KTKTVKLTLT (95 aa)). A helical membrane pass occupies residues 329-349 (VVISYLVCWAPFFVSHIWSAW). Over 350–360 (DPHAPFEGTEM) the chain is Extracellular. The chain crosses the membrane as a helical span at residues 361–381 (VITLLLGSLNSCINPWIYLAF). Residues 382–420 (SDQLRRKVTQCCPRSWGQRPSTLSHDSTDFRSGSRPTHS) are Cytoplasmic-facing. Positions 397–420 (WGQRPSTLSHDSTDFRSGSRPTHS) are disordered. A compositionally biased stretch (polar residues) spans 399–420 (QRPSTLSHDSTDFRSGSRPTHS).

This sequence belongs to the G-protein coupled receptor 1 family. Vasopressin/oxytocin receptor subfamily. Nephridia in clitellum region.

It localises to the cell membrane. In terms of biological role, receptor for annetocin. Activation by annetocin may induce egg-laying behavior through calcium-dependent signaling. This chain is Annetocin receptor, found in Eisenia fetida (Red wiggler worm).